The primary structure comprises 179 residues: Ubiquitin-conjugating enzyme E2 C (179 aa).

Residues 1–31 (MASQNRDPVAASVAAARKGAEPSGGAARGPV) are disordered. At alanine 2 the chain carries N-acetylalanine. A Phosphoserine modification is found at serine 3. The UBC core domain occupies 30–175 (PVGKRLQQEL…LQETYSKQVS (146 aa)). Catalysis depends on cysteine 114, which acts as the Glycyl thioester intermediate.

This sequence belongs to the ubiquitin-conjugating enzyme family. Component of the APC/C complex, composed of at least 14 distinct subunits that assemble into a complex of at least 19 chains with a combined molecular mass of around 1.2 MDa. Within this complex, directly interacts with ANAPC2. Autoubiquitinated by the APC/C complex, leading to its degradation by the proteasome. Its degradation plays a central role in APC/C regulation, allowing cyclin-A accumulation before S phase entry. APC/C substrates inhibit the autoubiquitination of UBE2C/UBCH10 but not its E2 function, hence APC/C remaining active until its substrates have been destroyed.

The catalysed reaction is S-ubiquitinyl-[E1 ubiquitin-activating enzyme]-L-cysteine + [E2 ubiquitin-conjugating enzyme]-L-cysteine = [E1 ubiquitin-activating enzyme]-L-cysteine + S-ubiquitinyl-[E2 ubiquitin-conjugating enzyme]-L-cysteine.. The enzyme catalyses S-ubiquitinyl-[E1 ubiquitin-activating enzyme]-L-cysteine + [acceptor protein]-L-lysine = [E1 ubiquitin-activating enzyme]-L-cysteine + N(6)-monoubiquitinyl-[acceptor protein]-L-lysine.. It functions in the pathway protein modification; protein ubiquitination. In terms of biological role, accepts ubiquitin from the E1 complex and catalyzes its covalent attachment to other proteins. In vitro catalyzes 'Lys-11'- and 'Lys-48'-linked polyubiquitination. Acts as an essential factor of the anaphase promoting complex/cyclosome (APC/C), a cell cycle-regulated ubiquitin ligase that controls progression through mitosis. Acts by initiating 'Lys-11'-linked polyubiquitin chains on APC/C substrates, leading to the degradation of APC/C substrates by the proteasome and promoting mitotic exit. This Bos taurus (Bovine) protein is Ubiquitin-conjugating enzyme E2 C (UBE2C).